A 303-amino-acid polypeptide reads, in one-letter code: Serine/threonine-protein phosphatase 6 catalytic subunit (303 aa).

Positions 51, 53, 79, and 111 each coordinate Mn(2+). H112 acts as the Proton donor in catalysis. 2 residues coordinate Mn(2+): H161 and H235.

Belongs to the PPP phosphatase family. PP-6 (PP-V) subfamily. The cofactor is Mn(2+).

It is found in the cytoplasm. It carries out the reaction O-phospho-L-seryl-[protein] + H2O = L-seryl-[protein] + phosphate. It catalyses the reaction O-phospho-L-threonyl-[protein] + H2O = L-threonyl-[protein] + phosphate. Functionally, may be involved in controlling cellularization or in regulating transcription of the genes involved in this process. The protein is Serine/threonine-protein phosphatase 6 catalytic subunit (PpV) of Drosophila melanogaster (Fruit fly).